The following is an 84-amino-acid chain: MECRPGCGACCTAPSISSPIPGMPDGKPANTPCIQLDEQQRCKIFTSPLRPKVCAGLQASAEMCGNSRQQAMTWLIDLEMLTAP.

This sequence belongs to the UPF0153 family.

This is UPF0153 protein YeiW (yeiW) from Escherichia coli (strain K12).